We begin with the raw amino-acid sequence, 717 residues long: MRKILKLKVGREDLILETGLLAKQANGAVLATYGGSTVLATVCCSDSARENLDFVPLSVEYNEKYYAAGKIPGGFIKREGKPKDKEVLVSRLIDRPMRPLFDKRFGREIQVVPTTLSTDQMNPPDIVGMNAAFAAVFLSDIPFNGPIAAVRIAYLNSEFIVNPSFDEIQDSILDIVVAGSLDGITMVEGGANEVSEEVLLAAIDQAYEYIKQICNLQKEFILIVGEREKLPLAYEERVFEFKAELKDFIYSELKDACFVKGKLNRDKAIKLVKQKAYEHFSSVSQVDEENETLFYKALDDFEQEIVRRSILENNLRTDGRNPTQIRDIVAEVDLLRRTHGSALFTRGETQALAVTTLGTSIDEQIMDDIDGDKRLNFMLHYNFPPFSVGETGRLMTGRREIGHGHLAQRSLEAMLPKKDDFPYTIRVVSEILESNGSSSMATVCSGSMSLMAAGVPVKEQVAGIAMGLVSEGDKYVILSDILGEEDHLGDMDFKVAGTKNGITGFQMDIKISNVTKQLMKDALAQARIGRMHILSIMDSVISRSRDDISVNAPKIIQLQIDIDKISLVIGSTGKTVKAITDEFEVRVQIEQDGRITLFGTDSLKMQKAKARIESIVREPKIGEIYEGVVKKINSFGAFIELTPTKEGFLSNRPKSRDDRYGDMRHSRYGSGRHSRYGRDSRNTFAMRPPRLEEGQMVKVRISDIDKFGKIELELVRD.

Positions 486 and 492 each coordinate Mg(2+). A KH domain is found at 553-612 (PKIIQLQIDIDKISLVIGSTGKTVKAITDEFEVRVQIEQDGRITLFGTDSLKMQKAKARI). Positions 622 to 715 (GEIYEGVVKK…KFGKIELELV (94 aa)) constitute an S1 motif domain. Residues 650 to 683 (SNRPKSRDDRYGDMRHSRYGSGRHSRYGRDSRNT) form a disordered region. Basic and acidic residues predominate over residues 654-665 (KSRDDRYGDMRH). Basic residues predominate over residues 666-675 (SRYGSGRHSR).

The protein belongs to the polyribonucleotide nucleotidyltransferase family. The cofactor is Mg(2+).

The protein localises to the cytoplasm. It catalyses the reaction RNA(n+1) + phosphate = RNA(n) + a ribonucleoside 5'-diphosphate. Functionally, involved in mRNA degradation. Catalyzes the phosphorolysis of single-stranded polyribonucleotides processively in the 3'- to 5'-direction. This Borrelia turicatae (strain 91E135) protein is Polyribonucleotide nucleotidyltransferase.